A 187-amino-acid chain; its full sequence is GTP cyclohydrolase 1 (187 aa).

Zn(2+)-binding residues include C76, H79, and C148.

The protein belongs to the GTP cyclohydrolase I family. Homomer.

It carries out the reaction GTP + H2O = 7,8-dihydroneopterin 3'-triphosphate + formate + H(+). It functions in the pathway cofactor biosynthesis; 7,8-dihydroneopterin triphosphate biosynthesis; 7,8-dihydroneopterin triphosphate from GTP: step 1/1. In Streptococcus gordonii (strain Challis / ATCC 35105 / BCRC 15272 / CH1 / DL1 / V288), this protein is GTP cyclohydrolase 1.